We begin with the raw amino-acid sequence, 389 residues long: Probable protein phosphatase 2C 47 (389 aa).

In terms of domain architecture, PPM-type phosphatase spans Arg76–Phe346. Asp120, Gly121, Asp294, and Asp337 together coordinate Mn(2+).

This sequence belongs to the PP2C family. Mg(2+) serves as cofactor. Mn(2+) is required as a cofactor.

It catalyses the reaction O-phospho-L-seryl-[protein] + H2O = L-seryl-[protein] + phosphate. The catalysed reaction is O-phospho-L-threonyl-[protein] + H2O = L-threonyl-[protein] + phosphate. This chain is Probable protein phosphatase 2C 47, found in Oryza sativa subsp. japonica (Rice).